Here is a 150-residue protein sequence, read N- to C-terminus: MQIILLDKVVNLGNLGEIVKVKDGYARNFLIPTGRARRATEAAKAEFEAKRAELEKAAAEKLAAAQAQGEKLAGTTVKLTQKAGVDGRLFGSVTNHDIAEELNKQGYNVVKSQVRLPNGPIKVVGDNTVTVALHTDVAVEVTVSVYGETA.

It belongs to the bacterial ribosomal protein bL9 family.

Functionally, binds to the 23S rRNA. This chain is Large ribosomal subunit protein bL9, found in Acidovorax ebreus (strain TPSY) (Diaphorobacter sp. (strain TPSY)).